A 472-amino-acid chain; its full sequence is uncharacterized protein (472 aa).

The protein belongs to the IIV-6 198R family.

This is an uncharacterized protein from Acheta domesticus (House cricket).